Here is a 150-residue protein sequence, read N- to C-terminus: Urease accessory protein UreE (150 aa).

The protein belongs to the UreE family.

It is found in the cytoplasm. In terms of biological role, involved in urease metallocenter assembly. Binds nickel. Probably functions as a nickel donor during metallocenter assembly. The sequence is that of Urease accessory protein UreE from Streptococcus salivarius (strain 57.I).